We begin with the raw amino-acid sequence, 1041 residues long: Nuclear migration protein unc-83 (1041 aa).

3 disordered regions span residues 258-283 (VGHLTASDTEESEADEEDRHSQTETV), 453-498 (IHGQ…LEDD), and 613-646 (IRNRDSDTAPEHSDAAQAYEWDEYNPPQKDDSIS). Over residues 456-465 (QKKPLRRASR) the composition is skewed to basic residues. Residues 613 to 626 (IRNRDSDTAPEHSD) show a composition bias toward basic and acidic residues. Coiled-coil stretches lie at residues 785-816 (RSKEDVAKTLDAVTAIERRLSSERQELRDLLA) and 931-951 (KAELSIYSNALARLKDRFNDM). The 56-residue stretch at 986–1041 (TENEPLTIAEAISSSRLIKFTFALSLLAALAAIFYYHVFGKPFGPHVTYVNGPPPV) folds into the KASH domain. Residues 1005-1024 (FTFALSLLAALAAIFYYHVF) traverse the membrane as a helical; Anchor for type IV membrane protein segment.

As to quaternary structure, component of the unc-83-unc-84 LINC complex which contains at least unc-83 and unc-84. Within the unc-83-unc-84 LINC complex interacts with unc-84 (via C-terminus); the interaction is probably required to recruit unc-83 to the nuclear envelope where it then recruits dynein and kinesin-1 complexes to regulate nuclear migration. Interacts with bicd-1 and dlc-1. Interacts with nud-2 (via C-terminus); the interaction is direct, and is required for recruitment of nud-2 to the nuclear envelope. Interacts with klc-2; the interaction is direct. In terms of tissue distribution, predominantly expressed in migratory nuclei. Expressed in a variety of cell-types, including cells around the pharynx and in the uterus.

The protein resides in the nucleus membrane. Its subcellular location is the nucleus outer membrane. Cargo-specific adapter that is involved in nuclear migration during development and thereafter. Component of the unc-83-unc-84 LINC (LInker of Nucleoskeleton and Cytoskeleton) complex where it interacts with unc-84 to form a bridge connecting the nuclear envelope to the cytoskeleton which allows for nuclear transport along microtubules. Within the complex, connects the nuclear envelope to the microtubule cytoskeleton through the kinesin-1 light chain protein klc-2 (most likely within the Kinesin 1 motor complex) to regulate nuclear migrations. Moreover, within the complex, also recruits the large microtubule-associated bicd-1-dlc-1-egal-1 and lis-1-nud-2 complexes to the nuclear envelope to regulate both the bidirectional migration of nuclei and the extent of nuclear migrations. Not required for centrosome attachment to the nucleus. This is Nuclear migration protein unc-83 from Caenorhabditis elegans.